The sequence spans 101 residues: Urease subunit gamma (101 aa).

Belongs to the urease gamma subunit family. Heterotrimer of UreA (gamma), UreB (beta) and UreC (alpha) subunits. Three heterotrimers associate to form the active enzyme.

Its subcellular location is the cytoplasm. It catalyses the reaction urea + 2 H2O + H(+) = hydrogencarbonate + 2 NH4(+). It functions in the pathway nitrogen metabolism; urea degradation; CO(2) and NH(3) from urea (urease route): step 1/1. This chain is Urease subunit gamma, found in Corynebacterium kroppenstedtii (strain DSM 44385 / JCM 11950 / CIP 105744 / CCUG 35717).